The chain runs to 113 residues: Flagellar hook-basal body complex protein FliE (113 aa).

Belongs to the FliE family.

The protein resides in the bacterial flagellum basal body. In Burkholderia mallei (strain NCTC 10247), this protein is Flagellar hook-basal body complex protein FliE.